A 76-amino-acid polypeptide reads, in one-letter code: Small ribosomal subunit protein bS16 (76 aa).

Belongs to the bacterial ribosomal protein bS16 family.

This chain is Small ribosomal subunit protein bS16, found in Helicobacter pylori (strain P12).